The chain runs to 462 residues: uncharacterized protein (462 aa).

The protein belongs to the IIV-6 329R family.

This is an uncharacterized protein from Aedes vexans (Inland floodwater mosquito).